An 83-amino-acid polypeptide reads, in one-letter code: Small integral membrane protein 22 (83 aa).

A helical transmembrane segment spans residues 32 to 52; it reads VAFIVFLTFMGTVLLLLLLVV. Positions 60–83 are disordered; sequence SPGPRRESPRKERPKGVDNLALEP. A compositionally biased stretch (basic and acidic residues) spans 63–75; the sequence is PRRESPRKERPKG.

In terms of assembly, interacts with CANX and DDOST. Interacts with SQLE; this interaction modulates lipid droplet formation.

It is found in the membrane. The protein localises to the late endosome. Functionally, may modulate lipid droplet formation throught interaction with SQLE. The polypeptide is Small integral membrane protein 22 (Homo sapiens (Human)).